The primary structure comprises 281 residues: Probable endonuclease 4 (281 aa).

Histidine 69, histidine 109, glutamate 145, aspartate 179, histidine 182, histidine 216, aspartate 229, histidine 231, and glutamate 261 together coordinate Zn(2+).

This sequence belongs to the AP endonuclease 2 family. It depends on Zn(2+) as a cofactor.

It carries out the reaction Endonucleolytic cleavage to 5'-phosphooligonucleotide end-products.. In terms of biological role, endonuclease IV plays a role in DNA repair. It cleaves phosphodiester bonds at apurinic or apyrimidinic (AP) sites, generating a 3'-hydroxyl group and a 5'-terminal sugar phosphate. The polypeptide is Probable endonuclease 4 (Proteus mirabilis (strain HI4320)).